Reading from the N-terminus, the 115-residue chain is Large ribosomal subunit protein uL18 (115 aa).

The protein belongs to the universal ribosomal protein uL18 family. Part of the 50S ribosomal subunit; part of the 5S rRNA/L5/L18/L25 subcomplex. Contacts the 5S and 23S rRNAs.

This is one of the proteins that bind and probably mediate the attachment of the 5S RNA into the large ribosomal subunit, where it forms part of the central protuberance. The sequence is that of Large ribosomal subunit protein uL18 from Mycoplasma genitalium (strain ATCC 33530 / DSM 19775 / NCTC 10195 / G37) (Mycoplasmoides genitalium).